The following is a 128-amino-acid chain: Large ribosomal subunit protein bL17 (128 aa).

This sequence belongs to the bacterial ribosomal protein bL17 family. As to quaternary structure, part of the 50S ribosomal subunit. Contacts protein L32.

In Streptococcus equi subsp. zooepidemicus (strain H70), this protein is Large ribosomal subunit protein bL17.